The primary structure comprises 1616 residues: Protein P200 (1616 aa).

Disordered stretches follow at residues 1-41 (MPKT…DKVE), 878-909 (HFQP…QAEF), 931-975 (QQLE…LDQN), 1004-1083 (DNVE…EPVD), 1100-1132 (FDKN…TVGE), and 1159-1433 (ISEP…SEEE). The tract at residues 891-1389 (EAKFDSPVEI…QEAKFDSPVE (499 aa)) is 2 X 26 AA repeats. The segment covering 938–952 (EETVVTPTEVTAFEP) has biased composition (low complexity). 2 stretches are compositionally biased toward basic and acidic residues: residues 1012 to 1029 (QPKE…KELQ) and 1059 to 1081 (VFEK…KSEP). 2 consecutive repeat copies span residues 1161-1186 (EPQV…SPVE) and 1205-1236 (EIQP…SPVE). Composition is skewed to polar residues over residues 1200–1227 (VQTQ…QTPQ) and 1242–1251 (EFSSEPTQQH). The tract at residues 1205–1389 (EIQPVESQPE…QEAKFDSPVE (185 aa)) is 2 X 32 AA repeats. Positions 1256–1270 (ASFDEPNYDFDEPNY) are enriched in acidic residues. The span at 1276–1285 (SYDSDLQPSE) shows a compositional bias: polar residues. Residues 1288 to 1302 (YDVDEPNYDFDEPNY) show a composition bias toward acidic residues. Over residues 1309–1323 (SEPQFEPQVEQQPGE) the composition is skewed to low complexity. A run of 2 repeats spans residues 1310–1339 (EPQF…SPVE) and 1358–1389 (EIQP…SPVE). A compositionally biased stretch (polar residues) spans 1353-1380 (VQTQPEIQPVESQPEATFDTVQPEQTPQ). The segment covering 1392 to 1406 (QEPQVSSEPEVVVQP) has biased composition (low complexity). Acidic residues predominate over residues 1416–1433 (VLEEPQADEIQPEASEEE).

Could be an accessory structural component in cytadherence. The protein is Protein P200 of Mycoplasma genitalium (strain ATCC 33530 / DSM 19775 / NCTC 10195 / G37) (Mycoplasmoides genitalium).